The chain runs to 121 residues: MARIAGVDIPRDKRIEVALTYIYGIGLTRAQTILSKTGVNPDTRVKDLEDGDVQKLRGATEAFTIEGDLRRQEGMALKRLQDIGCVRGRRHRMSLPVRGQRTRTNARTRRGARKTVAGKKK.

The tract at residues 97 to 121 (VRGQRTRTNARTRRGARKTVAGKKK) is disordered. Residues 100–121 (QRTRTNARTRRGARKTVAGKKK) are compositionally biased toward basic residues.

Belongs to the universal ribosomal protein uS13 family. Part of the 30S ribosomal subunit. Forms a loose heterodimer with protein S19. Forms two bridges to the 50S subunit in the 70S ribosome.

Its function is as follows. Located at the top of the head of the 30S subunit, it contacts several helices of the 16S rRNA. In the 70S ribosome it contacts the 23S rRNA (bridge B1a) and protein L5 of the 50S subunit (bridge B1b), connecting the 2 subunits; these bridges are implicated in subunit movement. Contacts the tRNAs in the A and P-sites. This is Small ribosomal subunit protein uS13 from Synechococcus sp. (strain WH7803).